A 563-amino-acid polypeptide reads, in one-letter code: DNA polymerase III subunit tau (563 aa).

45-52 (GPRGTGKT) is an ATP binding site. Zn(2+) contacts are provided by cysteine 64, cysteine 73, cysteine 76, and cysteine 79.

This sequence belongs to the DnaX/STICHEL family. Component of the DNA clamp loading complex consisting of tau(3):delta(1):delta'(1). The DNA polymerase III holoenzyme complex contains at least 10 different subunits organized into 3 functionally essential subassemblies: the Pol III core, the beta sliding clamp processivity factor and the clamp-loading complex. The Pol III core (subunits alpha, epsilon and theta) contains the polymerase and the 3'-5' exonuclease proofreading activities. The polymerase is tethered to the template via the dimeric beta sliding clamp processivity factor. The DNA clamp-loading complex assembles the beta sliding clamp onto the primed template and plays a central role in the organization and communication at the replication fork. Forms a complex with replicative DNA helicase DnaB (shown with G.stearothermophilus DnaB) tau(3):DnaB(6); a single ATP hydrolysis even is sufficient for complex formation. Colocalizes with DNA helicases PriA, RecQ and RecS.

It is found in the cytoplasm. The protein localises to the nucleoid. The catalysed reaction is DNA(n) + a 2'-deoxyribonucleoside 5'-triphosphate = DNA(n+1) + diphosphate. Its function is as follows. Part of the beta sliding clamp loading complex, which hydrolyzes ATP to load the beta clamp onto primed DNA to form the DNA replication pre-initiation complex. DNA polymerase III is a complex, multichain enzyme responsible for most of the replicative DNA synthesis in bacteria. This chain is DNA polymerase III subunit tau, found in Bacillus subtilis (strain 168).